A 218-amino-acid chain; its full sequence is Large ribosomal subunit protein uL3 (218 aa).

The protein belongs to the universal ribosomal protein uL3 family. In terms of assembly, part of the 50S ribosomal subunit. Forms a cluster with proteins L14 and L19.

Its function is as follows. One of the primary rRNA binding proteins, it binds directly near the 3'-end of the 23S rRNA, where it nucleates assembly of the 50S subunit. In Corynebacterium glutamicum (strain R), this protein is Large ribosomal subunit protein uL3.